The chain runs to 194 residues: Small COPII coat GTPase SAR1B (194 aa).

The STAR; SAR1-N-terminal activation recruitment. Required for the activation and subsequent recruitment to ER membrane signature appears at 2–4 (FLV). The interval 10–14 (MFLWL) is mediates recruitment to ER membranes. Asn-30, Ala-31, Gly-32, Lys-33, Thr-34, and Thr-35 together coordinate GDP. Position 30 (Asn-30) interacts with GTP. Residues Gly-32, Lys-33, Thr-34, and Thr-35 each contribute to the GTP site. Position 70 (Asp-70) interacts with Mg(2+). Residues Lys-131, Asp-133, and Ile-172 each contribute to the GDP site. The GTP site is built by Lys-131, Asp-133, and Ile-172.

This sequence belongs to the small GTPase superfamily. SAR1 family. Homodimer; upon association with membrane. Part of the coat protein complex II/COPII, composed of SEC23/24 and SEC13/31 heterodimers, that it helps recruit and assemble on endoplasmic reticulum (ER) membranes at ER exit sites.

The protein localises to the endoplasmic reticulum membrane. It is found in the golgi apparatus. The protein resides in the golgi stack membrane. It localises to the cytoplasm. Its subcellular location is the cytosol. The enzyme catalyses GTP + H2O = GDP + phosphate + H(+). With respect to regulation, small GTPases activation is mediated by guanine exchange factors (GEF), while inactivation through hydrolysis of the bound GTP is stimulated by GTPase activating proteins (GAP). Its function is as follows. Small GTPase that cycles between an active GTP-bound and an inactive GDP-bound state and mainly functions in vesicle-mediated endoplasmic reticulum (ER) to Golgi transport. The active GTP-bound form inserts into the endoplasmic reticulum membrane where it recruits the remainder of the coat protein complex II/COPII. The coat protein complex II assembling and polymerizing on endoplasmic reticulum membrane is responsible for both the sorting of cargos and the deformation and budding of membranes into vesicles destined to the Golgi. This is Small COPII coat GTPase SAR1B (sarB) from Dictyostelium discoideum (Social amoeba).